Consider the following 599-residue polypeptide: Elongation factor 4 (599 aa).

One can recognise a tr-type G domain in the interval 4-186; the sequence is EHIRNFSIIA…EIVKKIPPPK (183 aa). GTP contacts are provided by residues 16-21 and 133-136; these read DHGKST and NKID.

Belongs to the TRAFAC class translation factor GTPase superfamily. Classic translation factor GTPase family. LepA subfamily.

The protein resides in the cell inner membrane. The enzyme catalyses GTP + H2O = GDP + phosphate + H(+). Functionally, required for accurate and efficient protein synthesis under certain stress conditions. May act as a fidelity factor of the translation reaction, by catalyzing a one-codon backward translocation of tRNAs on improperly translocated ribosomes. Back-translocation proceeds from a post-translocation (POST) complex to a pre-translocation (PRE) complex, thus giving elongation factor G a second chance to translocate the tRNAs correctly. Binds to ribosomes in a GTP-dependent manner. The chain is Elongation factor 4 from Citrifermentans bemidjiense (strain ATCC BAA-1014 / DSM 16622 / JCM 12645 / Bem) (Geobacter bemidjiensis).